The sequence spans 296 residues: Probable AP endonuclease (296 aa).

Cys-16 and Cys-20 are oxidised to a cystine. The Zn(2+) site is built by His-78, His-115, Glu-142, His-182, His-218, Asp-231, His-233, and Glu-271.

Belongs to the AP endonuclease 2 family. Zn(2+) serves as cofactor.

It is found in the host nucleus. The protein resides in the host cytoplasm. It localises to the virion. Functionally, endonuclease of the viral base excision repair system that catalyzes DNA cleavage reaction at the apurinic or apyrimidinic sites (AP sites). Cleaves phosphodiester bonds on the 5' side of AP sites. In addition to endonuclease activity, the AP endonuclease has a proofreading 3'-5' exonuclease activity that is considerably more efficient in the elimination of a mismatch than in that of a correctly paired base. Displays 3'-phosphatase and 3'-repair diesterase activities. The single nucleotide gaps generated by the AP endonuclease are filled by the viral repair DNA polymerase X and the DNA ligase. The protein is Probable AP endonuclease of Ornithodoros (relapsing fever ticks).